The primary structure comprises 119 residues: NADH-quinone oxidoreductase subunit 7 (119 aa).

3 consecutive transmembrane segments (helical) span residues 11-31 (LIYV…GALL), 59-79 (VHFY…AFLW), and 88-108 (LGLY…VGFL).

Belongs to the complex I subunit 3 family. NDH-1 is composed of 15 different subunits, Nqo1 to Nqo15. The complex has a L-shaped structure, with the hydrophobic arm (subunits Nqo7, Nqo8 and Nqo10 to Nqo14) embedded in the membrane and the hydrophilic peripheral arm (subunits Nqo1 to Nqo6, Nqo9 and Nqo15) protruding into the bacterial cytoplasm. The hydrophilic domain contains all the redox centers.

It is found in the cell inner membrane. The catalysed reaction is a quinone + NADH + 5 H(+)(in) = a quinol + NAD(+) + 4 H(+)(out). NDH-1 shuttles electrons from NADH, via FMN and iron-sulfur (Fe-S) centers, to quinones in the respiratory chain. The immediate electron acceptor for the enzyme in this species is menaquinone. Couples the redox reaction to proton translocation (for every two electrons transferred, four hydrogen ions are translocated across the cytoplasmic membrane), and thus conserves the redox energy in a proton gradient required for the synthesis of ATP. This chain is NADH-quinone oxidoreductase subunit 7 (nqo7), found in Thermus thermophilus (strain ATCC 27634 / DSM 579 / HB8).